The following is a 156-amino-acid chain: MSKKVTDTVQEMAQPILDDLQLELVDIEFVKEGQNWFLRVFIDSENGVDIEECAKVSEALSEKLDEADPITQNYFLEVSSPGAERPLKKKADFEKSLGKNVYMKTYEPIDGLKVFEGKLAEFDGQTVTIEMTVKTRKKRVNIPYEKIANARLAVTF.

It belongs to the RimP family.

It localises to the cytoplasm. In terms of biological role, required for maturation of 30S ribosomal subunits. This chain is Ribosome maturation factor RimP, found in Bacillus velezensis (strain DSM 23117 / BGSC 10A6 / LMG 26770 / FZB42) (Bacillus amyloliquefaciens subsp. plantarum).